The sequence spans 1066 residues: Allene oxide synthase-lipoxygenase protein (1066 aa).

Residues 1–371 (MTWKNFGFEI…LKIGSLVPAG (371 aa)) are allene oxide synthase. Tyr353 lines the heme pocket. The tract at residues 372–1066 (QNAIYNVEVE…PERIPNGTAI (695 aa)) is arachidonate 8-lipoxygenase. The PLAT domain occupies 374 to 490 (AIYNVEVETG…KDMVLFPGEA (117 aa)). Positions 387, 389, 390, 391, 416, 417, 419, 452, and 454 each coordinate Ca(2+). Residues 491–1066 (TLPFNEVPAI…PERIPNGTAI (576 aa)) enclose the Lipoxygenase domain. Fe cation-binding residues include His757, His762, His943, Asn947, and Ile1066.

In the C-terminal section; belongs to the lipoxygenase family. Dimer. Ca(2+) is required as a cofactor. Requires Fe cation as cofactor. The cofactor is heme.

The protein resides in the cytoplasm. It is found in the membrane. The enzyme catalyses (5Z,8Z,11Z,14Z)-eicosatetraenoate + O2 = (8R)-hydroperoxy-(5Z,9E,11Z,14Z)-eicosatetraenoate. The catalysed reaction is (8R)-hydroperoxy-(5Z,9E,11Z,14Z)-eicosatetraenoate = 8,9-epoxy-(5Z,9E,11Z,14Z)-eicosatetraenoate + H2O. It catalyses the reaction (5Z,8Z,11Z,14Z,17Z)-eicosapentaenoate + O2 = (8R)-hydroperoxy-(5Z,9E,11Z,14Z,17Z)-eicosapentaenoate. It carries out the reaction (4Z,7Z,10Z,13Z,16Z,19Z)-docosahexaenoate + O2 = 10-hydroperoxy-(4Z,7Z,11E,13Z,16Z,19Z)-docosahexaenoate. The enzyme catalyses (8Z,11Z,14Z)-eicosatrienoate + O2 = (8R)-hydroperoxy-(9E,11Z,14Z)-eicosatrienoate. The catalysed reaction is (8Z,11Z,14Z)-eicosatrienoate + O2 = 10-hydroperoxy-(8Z,11Z,14Z)-eicosatrienoate. It catalyses the reaction (8Z,11Z,14Z)-eicosatrienoate + O2 = 11-hydroperoxy-(8Z,12E,14Z)-eicosatrienoate. It functions in the pathway lipid metabolism; arachidonate metabolism. It participates in lipid metabolism; fatty acid metabolism. With respect to regulation, lipoxygenase activity is stimulated by calcium, sodium, lithium and potassium ions. Calcium binding promotes interaction with membranes and thus facilitates access to substrates. In terms of biological role, bifunctional enzyme which is responsible for allene oxide biosynthesis via a two-step reaction; first the lipoxygenase reaction that converts polyunsaturated fatty acids such as arachidonate ((5Z,8Z,11Z,14Z)-eicosatetraenoate) into a (8R)-hydroperoxide intermediate ((8R)-hydroperoxy-(5Z,9E,11Z,14Z)-eicosatetraenoate) followed by the allene oxide synthase reaction that converts the hydroperoxide intermediate ((8R)-hydroperoxy-(5Z,9E,11Z,14Z)-eicosatetraenoate) into the allene oxide (8,9-epoxy-(5Z,9E,11Z,14Z)-eicosatetraenoate). Shows preference for C20 or C22 highly polyunsaturated fatty acids and no activity with C18 fatty acids in vitro. Fatty acid allene oxides are intermediates in the formation of cyclopentenones or hydrolytic products in marine systems, most notably the prostanoid-related clavulones. This Plexaura homomalla (Black sea rod) protein is Allene oxide synthase-lipoxygenase protein.